The primary structure comprises 170 residues: UPF0260 protein RPC_1790 (170 aa).

The protein belongs to the UPF0260 family.

The chain is UPF0260 protein RPC_1790 from Rhodopseudomonas palustris (strain BisB18).